Consider the following 209-residue polypeptide: Orotate phosphoribosyltransferase (209 aa).

5-phospho-alpha-D-ribose 1-diphosphate is bound by residues Arg96, Lys100, His102, and 122 to 130 (EDLISTGGS). Orotate is bound at residue Ser126.

It belongs to the purine/pyrimidine phosphoribosyltransferase family. PyrE subfamily. Homodimer. The cofactor is Mg(2+).

It carries out the reaction orotidine 5'-phosphate + diphosphate = orotate + 5-phospho-alpha-D-ribose 1-diphosphate. It participates in pyrimidine metabolism; UMP biosynthesis via de novo pathway; UMP from orotate: step 1/2. Functionally, catalyzes the transfer of a ribosyl phosphate group from 5-phosphoribose 1-diphosphate to orotate, leading to the formation of orotidine monophosphate (OMP). This is Orotate phosphoribosyltransferase from Streptococcus pyogenes serotype M5 (strain Manfredo).